The chain runs to 337 residues: Anthranilate phosphoribosyltransferase (337 aa).

5-phospho-alpha-D-ribose 1-diphosphate is bound by residues G81, 84–85 (GD), S89, 91–94 (NVST), 109–117 (KHGNRAASS), and A121. G81 contributes to the anthranilate binding site. S93 contacts Mg(2+). N112 contacts anthranilate. Residue R167 coordinates anthranilate. The Mg(2+) site is built by D226 and E227.

Belongs to the anthranilate phosphoribosyltransferase family. Homodimer. Mg(2+) is required as a cofactor.

The catalysed reaction is N-(5-phospho-beta-D-ribosyl)anthranilate + diphosphate = 5-phospho-alpha-D-ribose 1-diphosphate + anthranilate. It functions in the pathway amino-acid biosynthesis; L-tryptophan biosynthesis; L-tryptophan from chorismate: step 2/5. Its function is as follows. Catalyzes the transfer of the phosphoribosyl group of 5-phosphorylribose-1-pyrophosphate (PRPP) to anthranilate to yield N-(5'-phosphoribosyl)-anthranilate (PRA). The polypeptide is Anthranilate phosphoribosyltransferase (Methylobacterium sp. (strain 4-46)).